The following is a 270-amino-acid chain: Non-homologous end joining protein Ku (270 aa).

The Ku domain occupies 10–194 (SLGLLNIGIK…NYPIQKQELT (185 aa)).

The protein belongs to the prokaryotic Ku family. In terms of assembly, homodimer. Interacts with LigD.

With LigD forms a non-homologous end joining (NHEJ) DNA repair enzyme, which repairs dsDNA breaks with reduced fidelity. Binds linear dsDNA with 5'- and 3'- overhangs but not closed circular dsDNA nor ssDNA. Recruits and stimulates the ligase activity of LigD. The protein is Non-homologous end joining protein Ku of Bacillus thuringiensis subsp. konkukian (strain 97-27).